An 868-amino-acid chain; its full sequence is Alanine--tRNA ligase (868 aa).

Zn(2+) contacts are provided by histidine 556, histidine 560, cysteine 666, and histidine 670.

Belongs to the class-II aminoacyl-tRNA synthetase family. Zn(2+) serves as cofactor.

It is found in the cytoplasm. The enzyme catalyses tRNA(Ala) + L-alanine + ATP = L-alanyl-tRNA(Ala) + AMP + diphosphate. Functionally, catalyzes the attachment of alanine to tRNA(Ala) in a two-step reaction: alanine is first activated by ATP to form Ala-AMP and then transferred to the acceptor end of tRNA(Ala). Also edits incorrectly charged Ser-tRNA(Ala) and Gly-tRNA(Ala) via its editing domain. This chain is Alanine--tRNA ligase, found in Elusimicrobium minutum (strain Pei191).